The sequence spans 230 residues: Prolactin-6A1 (230 aa).

Positions 1–29 (MLSLSQPCFSGTLLMLLASNFLLWKNVAP) are cleaved as a signal peptide. An N-linked (GlcNAc...) asparagine glycan is attached at Asn57. Cystine bridges form between Cys89–Cys205 and Cys222–Cys230.

Belongs to the somatotropin/prolactin family. Expressed in both placenta and decidual tissues. Detected first in deciduals cells early in gestation and in trophoblasts later in pregnancy.

It localises to the secreted. The chain is Prolactin-6A1 (Prl6a1) from Mus musculus (Mouse).